We begin with the raw amino-acid sequence, 261 residues long: Troponin T, slow skeletal muscle (261 aa).

The span at Met1–Pro30 shows a compositional bias: acidic residues. Disordered regions lie at residues Met1–Asp61 and Glu108–Val152. Phosphoserine; by CK2 is present on Ser2. The segment covering Val31 to Lys40 has biased composition (basic and acidic residues). Pro residues predominate over residues Ser42–Ile54. The segment covering Glu108–Lys148 has biased composition (basic and acidic residues).

The protein belongs to the troponin T family. Interacts with TPM3. As to expression, expressed in soleus muscle. Isoform 4 is predominantly expressed in fast muscles.

Troponin T is the tropomyosin-binding subunit of troponin, the thin filament regulatory complex which confers calcium-sensitivity to striated muscle actomyosin ATPase activity. The polypeptide is Troponin T, slow skeletal muscle (Tnnt1) (Rattus norvegicus (Rat)).